The primary structure comprises 162 residues: MTQQTVLDKIRSLVLPVLEEKGRELVDVEYRREGQGWILRLYIDQPGGVTLDACAEVSREVGVLLEVEDPIDTAYNLEVSSPGLDRPLTKLEDYERFAGRLAKVKSRVSIDVDGKGRGRKTFVGVLAGLSEGKVVLELKDKNGFRMEIPFEDIEKANLEIEF.

Belongs to the RimP family.

The protein localises to the cytoplasm. In terms of biological role, required for maturation of 30S ribosomal subunits. In Syntrophotalea carbinolica (strain DSM 2380 / NBRC 103641 / GraBd1) (Pelobacter carbinolicus), this protein is Ribosome maturation factor RimP.